We begin with the raw amino-acid sequence, 60 residues long: MAVQQNKKSPSKRGMHRSHNALTVPGIAVEPTTGETHLRHHISPNGFYRGRQVLKNKSEA.

A disordered region spans residues 1–60; that stretch reads MAVQQNKKSPSKRGMHRSHNALTVPGIAVEPTTGETHLRHHISPNGFYRGRQVLKNKSEA. A compositionally biased stretch (basic residues) spans 9–19; it reads SPSKRGMHRSH.

It belongs to the bacterial ribosomal protein bL32 family.

The chain is Large ribosomal subunit protein bL32 from Paracidovorax citrulli (strain AAC00-1) (Acidovorax citrulli).